Consider the following 107-residue polypeptide: Phycocyanobilin lyase subunit beta (107 aa).

It belongs to the CpcE/RpcE/PecE family. CpcE and CpcF associate to form a lyase.

Its function is as follows. Required for the chromophorylation of the CpcA gene product. This Mastigocladus laminosus (Fischerella sp.) protein is Phycocyanobilin lyase subunit beta (cpcF).